The sequence spans 529 residues: MPPKVSASNATFKNREKPQEVRKANIIAARAVADAIRTSLGPKGMDKMIKTARGEILISNDGHTILKQMAILHPVAKMLVEVSAAQDSEAGDGTTSVVILTGALLGAAEKLLAKGIHPTIIAESFQRAGQRAVEVLLGMSKRISLQDRAELVRAASTSLSSKIVSQYSTFLAPLAVDCVLSLTNEASTNVDLNDIRLVKKVGGTIDDTEMVDGVVLTQNIVKSAGGPVRMEKAKIGLIQFQISPPKPDTENNIVVNDYRQMDKILKEERAYLLKICKKIKKAKCNVLLIQKSILRDAVNELALHFLSKLNIVVIKDVERDEIEFLSKSLGCKPISDVELFTEDRLGSADLVEEIDSDGTKIVKITGIKTGNAKPTVSCIVRGANNVVLDETERSLHDALCVIRCLVKERALIAGGGAPEIEVSRTIMRESRAMQGVEAFVWQEFAEALEVIPTTLAENAGLNSIKVVTELRSRHESGETNAGISVRRSGTTNTYDEHILQPVLVSTSAITLAAECVKSILRIDDITFSR.

The protein belongs to the TCP-1 chaperonin family. As to quaternary structure, heterooligomeric complex of about 850 to 900 kDa that forms two stacked rings, 12 to 16 nm in diameter.

Its subcellular location is the cytoplasm. Molecular chaperone; assists the folding of proteins upon ATP hydrolysis. Known to play a role, in vitro, in the folding of actin and tubulin. The chain is T-complex protein 1 subunit delta (CCT4) from Eremothecium gossypii (strain ATCC 10895 / CBS 109.51 / FGSC 9923 / NRRL Y-1056) (Yeast).